A 433-amino-acid chain; its full sequence is 23S rRNA (uracil(1939)-C(5))-methyltransferase RlmD (433 aa).

The TRAM domain occupies 10–68; it reads RTTTRQIITVSVNDLDSFGQGVARHNGKTLFIPGLLPQENAEVTVTEDKKQYARAKVVR. The [4Fe-4S] cluster site is built by C81, C87, C90, and C162. Residues Q265, F294, N299, E315, N342, and D363 each coordinate S-adenosyl-L-methionine. The Nucleophile role is filled by C389.

Belongs to the class I-like SAM-binding methyltransferase superfamily. RNA M5U methyltransferase family. RlmD subfamily.

It catalyses the reaction uridine(1939) in 23S rRNA + S-adenosyl-L-methionine = 5-methyluridine(1939) in 23S rRNA + S-adenosyl-L-homocysteine + H(+). In terms of biological role, catalyzes the formation of 5-methyl-uridine at position 1939 (m5U1939) in 23S rRNA. The sequence is that of 23S rRNA (uracil(1939)-C(5))-methyltransferase RlmD from Shigella boydii serotype 4 (strain Sb227).